The chain runs to 227 residues: Enolase-phosphatase E1 (227 aa).

This sequence belongs to the HAD-like hydrolase superfamily. MasA/MtnC family. Monomer. It depends on Mg(2+) as a cofactor.

It catalyses the reaction 5-methylsulfanyl-2,3-dioxopentyl phosphate + H2O = 1,2-dihydroxy-5-(methylsulfanyl)pent-1-en-3-one + phosphate. Its pathway is amino-acid biosynthesis; L-methionine biosynthesis via salvage pathway; L-methionine from S-methyl-5-thio-alpha-D-ribose 1-phosphate: step 3/6. It functions in the pathway amino-acid biosynthesis; L-methionine biosynthesis via salvage pathway; L-methionine from S-methyl-5-thio-alpha-D-ribose 1-phosphate: step 4/6. Bifunctional enzyme that catalyzes the enolization of 2,3-diketo-5-methylthiopentyl-1-phosphate (DK-MTP-1-P) into the intermediate 2-hydroxy-3-keto-5-methylthiopentenyl-1-phosphate (HK-MTPenyl-1-P), which is then dephosphorylated to form the acireductone 1,2-dihydroxy-3-keto-5-methylthiopentene (DHK-MTPene). In Pseudomonas syringae pv. tomato (strain ATCC BAA-871 / DC3000), this protein is Enolase-phosphatase E1.